The sequence spans 243 residues: Hydroxyacylglutathione hydrolase (243 aa).

Zn(2+)-binding residues include His52, His54, Asp56, His57, His108, Asp125, and His163.

Belongs to the metallo-beta-lactamase superfamily. Glyoxalase II family. In terms of assembly, monomer. Zn(2+) is required as a cofactor.

It catalyses the reaction an S-(2-hydroxyacyl)glutathione + H2O = a 2-hydroxy carboxylate + glutathione + H(+). It participates in secondary metabolite metabolism; methylglyoxal degradation; (R)-lactate from methylglyoxal: step 2/2. Thiolesterase that catalyzes the hydrolysis of S-D-lactoyl-glutathione to form glutathione and D-lactic acid. The chain is Hydroxyacylglutathione hydrolase from Haemophilus influenzae (strain PittGG).